The following is a 533-amino-acid chain: Di/tripeptide-binding protein 4 (533 aa).

The signal sequence occupies residues 1-25 (MLHPLLRHLPLALALALCAAGAAQA).

Belongs to the bacterial solute-binding protein 5 family. As to quaternary structure, the complex is composed of two ATP-binding proteins (DppD and DppF), two transmembrane proteins (DppB and DppC) and a solute-binding protein (DppA4). Five orthologous SBPs (DppA1-A5) are present in P.aeruginosa, which increases the substrate specificity of the DppBCDF transporter.

Its function is as follows. Part of the ABC transporter DppABCDF involved in the uptake of various di/tripeptides. Prefers dipeptides with acidic residues at the C-terminal end. Efficiently uses tripeptides. This chain is Di/tripeptide-binding protein 4, found in Pseudomonas aeruginosa (strain UCBPP-PA14).